Reading from the N-terminus, the 209-residue chain is Pyridoxine/pyridoxamine 5'-phosphate oxidase (209 aa).

Substrate-binding positions include 7–10 and lysine 64; that span reads REDY. FMN contacts are provided by residues 59-64, 74-75, arginine 80, and lysine 81; these read RIVLLK and FT. Residues tyrosine 121, arginine 125, and serine 129 each coordinate substrate. FMN contacts are provided by residues 138–139 and tryptophan 182; that span reads QS. 188–190 lines the substrate pocket; sequence RLH. FMN is bound at residue arginine 192.

It belongs to the pyridoxamine 5'-phosphate oxidase family. As to quaternary structure, homodimer. The cofactor is FMN.

It catalyses the reaction pyridoxamine 5'-phosphate + O2 + H2O = pyridoxal 5'-phosphate + H2O2 + NH4(+). It carries out the reaction pyridoxine 5'-phosphate + O2 = pyridoxal 5'-phosphate + H2O2. It functions in the pathway cofactor metabolism; pyridoxal 5'-phosphate salvage; pyridoxal 5'-phosphate from pyridoxamine 5'-phosphate: step 1/1. It participates in cofactor metabolism; pyridoxal 5'-phosphate salvage; pyridoxal 5'-phosphate from pyridoxine 5'-phosphate: step 1/1. Functionally, catalyzes the oxidation of either pyridoxine 5'-phosphate (PNP) or pyridoxamine 5'-phosphate (PMP) into pyridoxal 5'-phosphate (PLP). The polypeptide is Pyridoxine/pyridoxamine 5'-phosphate oxidase (Actinobacillus pleuropneumoniae serotype 3 (strain JL03)).